The chain runs to 176 residues: MGKVIFYEDRNFQGRHYECSSDCADLSPYFSRCNSIRVEGGCWVLYEKPNYMGYQYFLTRGEYPDYQRWMGFNDTIRSCRIIPQYRGSYRMRIYERPDFGGQMMEFMDDCPSVYDTFRYRDIHSCHVMDGYWIFYEHPSYRGRQYFMRPGEYKKFSDWGATCPTIGSFRRIMDSWY.

2 consecutive Beta/gamma crystallin 'Greek key' domains span residues Gly-2 to Gly-40 and Gly-41 to Pro-83. A connecting peptide region spans residues Gln-84 to Ser-88. 2 Beta/gamma crystallin 'Greek key' domains span residues Tyr-89–Asp-129 and Gly-130–Met-172.

Belongs to the beta/gamma-crystallin family. As to quaternary structure, monomer.

In terms of biological role, crystallins are the dominant structural components of the vertebrate eye lens. This chain is Gamma-crystallin M2 (GM2), found in Chiloscyllium indicum (Slender bamboo shark).